The chain runs to 577 residues: Sulfite reductase [NADPH] hemoprotein beta-component 2 (577 aa).

4 residues coordinate [4Fe-4S] cluster: Cys-441, Cys-447, Cys-486, and Cys-490. Cys-490 serves as a coordination point for siroheme.

This sequence belongs to the nitrite and sulfite reductase 4Fe-4S domain family. As to quaternary structure, alpha(8)-beta(8). The alpha component is a flavoprotein, the beta component is a hemoprotein. Siroheme is required as a cofactor. Requires [4Fe-4S] cluster as cofactor.

It carries out the reaction hydrogen sulfide + 3 NADP(+) + 3 H2O = sulfite + 3 NADPH + 4 H(+). Its pathway is sulfur metabolism; hydrogen sulfide biosynthesis; hydrogen sulfide from sulfite (NADPH route): step 1/1. Functionally, component of the sulfite reductase complex that catalyzes the 6-electron reduction of sulfite to sulfide. This is one of several activities required for the biosynthesis of L-cysteine from sulfate. The chain is Sulfite reductase [NADPH] hemoprotein beta-component 2 from Pectobacterium carotovorum subsp. carotovorum (strain PC1).